A 322-amino-acid polypeptide reads, in one-letter code: 4-hydroxy-3-methylbut-2-enyl diphosphate reductase (322 aa).

Position 15 (Cys-15) interacts with [4Fe-4S] cluster. (2E)-4-hydroxy-3-methylbut-2-enyl diphosphate is bound by residues His-44 and His-77. Residues His-44 and His-77 each coordinate dimethylallyl diphosphate. Residues His-44 and His-77 each coordinate isopentenyl diphosphate. Cys-99 is a [4Fe-4S] cluster binding site. His-127 serves as a coordination point for (2E)-4-hydroxy-3-methylbut-2-enyl diphosphate. His-127 is a dimethylallyl diphosphate binding site. Position 127 (His-127) interacts with isopentenyl diphosphate. Glu-129 acts as the Proton donor in catalysis. Thr-168 lines the (2E)-4-hydroxy-3-methylbut-2-enyl diphosphate pocket. [4Fe-4S] cluster is bound at residue Cys-198. (2E)-4-hydroxy-3-methylbut-2-enyl diphosphate-binding residues include Ser-226, Ser-227, Asn-228, and Ser-270. 4 residues coordinate dimethylallyl diphosphate: Ser-226, Ser-227, Asn-228, and Ser-270. The isopentenyl diphosphate site is built by Ser-226, Ser-227, Asn-228, and Ser-270.

This sequence belongs to the IspH family. [4Fe-4S] cluster serves as cofactor.

It catalyses the reaction isopentenyl diphosphate + 2 oxidized [2Fe-2S]-[ferredoxin] + H2O = (2E)-4-hydroxy-3-methylbut-2-enyl diphosphate + 2 reduced [2Fe-2S]-[ferredoxin] + 2 H(+). The catalysed reaction is dimethylallyl diphosphate + 2 oxidized [2Fe-2S]-[ferredoxin] + H2O = (2E)-4-hydroxy-3-methylbut-2-enyl diphosphate + 2 reduced [2Fe-2S]-[ferredoxin] + 2 H(+). It functions in the pathway isoprenoid biosynthesis; dimethylallyl diphosphate biosynthesis; dimethylallyl diphosphate from (2E)-4-hydroxy-3-methylbutenyl diphosphate: step 1/1. Its pathway is isoprenoid biosynthesis; isopentenyl diphosphate biosynthesis via DXP pathway; isopentenyl diphosphate from 1-deoxy-D-xylulose 5-phosphate: step 6/6. Functionally, catalyzes the conversion of 1-hydroxy-2-methyl-2-(E)-butenyl 4-diphosphate (HMBPP) into a mixture of isopentenyl diphosphate (IPP) and dimethylallyl diphosphate (DMAPP). Acts in the terminal step of the DOXP/MEP pathway for isoprenoid precursor biosynthesis. In Neisseria meningitidis serogroup C (strain 053442), this protein is 4-hydroxy-3-methylbut-2-enyl diphosphate reductase.